The sequence spans 494 residues: Apolipoprotein N-acyltransferase (494 aa).

The next 6 helical transmembrane spans lie at T16–I36, L41–L61, S62–S82, L133–G153, G173–F193, and L202–A222. Residues W235 to V461 form the CN hydrolase domain. The Proton acceptor role is filled by E276. K325 is an active-site residue. The active-site Nucleophile is the C373. The chain crosses the membrane as a helical span at residues Y468 to A488.

It belongs to the CN hydrolase family. Apolipoprotein N-acyltransferase subfamily.

The protein localises to the cell inner membrane. It catalyses the reaction N-terminal S-1,2-diacyl-sn-glyceryl-L-cysteinyl-[lipoprotein] + a glycerophospholipid = N-acyl-S-1,2-diacyl-sn-glyceryl-L-cysteinyl-[lipoprotein] + a 2-acyl-sn-glycero-3-phospholipid + H(+). It functions in the pathway protein modification; lipoprotein biosynthesis (N-acyl transfer). Functionally, catalyzes the phospholipid dependent N-acylation of the N-terminal cysteine of apolipoprotein, the last step in lipoprotein maturation. The protein is Apolipoprotein N-acyltransferase of Prochlorococcus marinus (strain SARG / CCMP1375 / SS120).